The sequence spans 319 residues: Iron-sulfur cluster transfer protein NUBPL (319 aa).

A mitochondrion-targeting transit peptide spans 1–38; that stretch reads MGTWRRLLLFGGVSLRGGGAATVPPRGCRALGCGRQLL. Residue 75 to 82 participates in ATP binding; it reads GKGGVGKS.

This sequence belongs to the Mrp/NBP35 ATP-binding proteins family. [4Fe-4S] cluster serves as cofactor.

The protein resides in the mitochondrion. Iron-sulfur cluster transfer protein involved in the assembly of the mitochondrial membrane respiratory chain NADH dehydrogenase (Complex I). May deliver one or more Fe-S clusters to complex I subunits. This Mus musculus (Mouse) protein is Iron-sulfur cluster transfer protein NUBPL (Nubpl).